We begin with the raw amino-acid sequence, 879 residues long: Alanine--tRNA ligase (879 aa).

Positions 566, 570, 668, and 672 each coordinate Zn(2+).

The protein belongs to the class-II aminoacyl-tRNA synthetase family. It depends on Zn(2+) as a cofactor.

The protein localises to the cytoplasm. The enzyme catalyses tRNA(Ala) + L-alanine + ATP = L-alanyl-tRNA(Ala) + AMP + diphosphate. Its function is as follows. Catalyzes the attachment of alanine to tRNA(Ala) in a two-step reaction: alanine is first activated by ATP to form Ala-AMP and then transferred to the acceptor end of tRNA(Ala). Also edits incorrectly charged Ser-tRNA(Ala) and Gly-tRNA(Ala) via its editing domain. This chain is Alanine--tRNA ligase, found in Clostridium beijerinckii (strain ATCC 51743 / NCIMB 8052) (Clostridium acetobutylicum).